The chain runs to 469 residues: MVIYSLPLARWVSSLRRYFRHELLPLLADLRLAIGLLLAIAVLSATGTVIEQEETAAFYQAHYPEHPALFGFLTWRVILSLGLDHVYRTPWFLAILILFGSSLAACSLTRQWPMLKRARRWSYLTRPQSFQRLPFRTYLPQQSLQGLPQQLRRQGYLVFQEGHYLYARKGLIGRIGPILVHVSMLLILLGAIWGSISGFKAQELIPSGGVASIQHLTGAGDLARAHLPTWQIRANRFWIDYAADGRVKQFYSDLSILDQGQEVKRQTISVNHPLSYRGVTLYQADWSIDSIRIRINNSPTFQIPVVPVRTEAGNKLWGAFVPTQPDMSQGLTLLLPDLQGTALLYDTEGQWMGSLRQGMSLALDEVAPQRFPNPLTLYLDEVIGATGLQIKSDPGIPAVYLGFGLLMVGVVMSYFSYSQIWALQTETGLYLGGKTNRALVTFEREFDRLVEQQKVAFSLSQIPVEAEIG.

3 consecutive transmembrane segments (helical) span residues 30–50 (LRLA…GTVI), 89–109 (TPWF…CSLT), and 175–195 (IGPI…IWGS).

The protein belongs to the Ccs1/CcsB family. As to quaternary structure, may interact with CcsA.

It localises to the cellular thylakoid membrane. Its function is as follows. Required during biogenesis of c-type cytochromes (cytochrome c6 and cytochrome f) at the step of heme attachment. The polypeptide is Cytochrome c biogenesis protein CcsB (Synechococcus sp. (strain JA-2-3B'a(2-13)) (Cyanobacteria bacterium Yellowstone B-Prime)).